A 401-amino-acid chain; its full sequence is Acetate kinase (401 aa).

Asn7 lines the Mg(2+) pocket. Lys14 provides a ligand contact to ATP. Arg91 serves as a coordination point for substrate. Residue Asp148 is the Proton donor/acceptor of the active site. ATP contacts are provided by residues 208 to 212 (HLGNG), 283 to 285 (DFR), and 331 to 335 (GVGEN). Position 384 (Glu384) interacts with Mg(2+).

Belongs to the acetokinase family. In terms of assembly, homodimer. Mg(2+) is required as a cofactor. Requires Mn(2+) as cofactor.

It localises to the cytoplasm. The catalysed reaction is acetate + ATP = acetyl phosphate + ADP. Its pathway is metabolic intermediate biosynthesis; acetyl-CoA biosynthesis; acetyl-CoA from acetate: step 1/2. Its function is as follows. Catalyzes the formation of acetyl phosphate from acetate and ATP. Can also catalyze the reverse reaction. The polypeptide is Acetate kinase (Helicobacter hepaticus (strain ATCC 51449 / 3B1)).